A 216-amino-acid chain; its full sequence is 3-isopropylmalate dehydratase small subunit (216 aa).

It belongs to the LeuD family. LeuD type 1 subfamily. Heterodimer of LeuC and LeuD.

The enzyme catalyses (2R,3S)-3-isopropylmalate = (2S)-2-isopropylmalate. Its pathway is amino-acid biosynthesis; L-leucine biosynthesis; L-leucine from 3-methyl-2-oxobutanoate: step 2/4. Its function is as follows. Catalyzes the isomerization between 2-isopropylmalate and 3-isopropylmalate, via the formation of 2-isopropylmaleate. This is 3-isopropylmalate dehydratase small subunit from Psychrobacter arcticus (strain DSM 17307 / VKM B-2377 / 273-4).